A 426-amino-acid polypeptide reads, in one-letter code: MATMANHDRETTQPTCQNCATSTTPLWRRDEMGQVLCNACGLFLKLHGRPRPISLKTDVIKSRNRVKTMRPDLAKQKKQQQQQQQQQNLAATADMNGGVGMMDPNNPAAAARRASQKSINGHPVDDNSPVSRTGTPNVYNPHIPIDHSLEYQFQAQQIPGFGVPTASPGRAPSPMNGEHMPQTHEQLLAANASLKTRVSELEVIQELYRGRLHQLETEENIRQASEPGKLEAQLRAQIDAMGEAHQQLQKELEESHRRENMLKRRLDELEVELKDVKDALESQDNGRHKKIRLDENVKTEPYAEVVEPQQPEQQQPAPAEQPIPTPMAIDEATPAPAPAPEAAPEQAPAPAPEPVQEQAQEPEPAPVSEPTEASAPAPAPEADSVVPEPTPAAPESAPTEEPAAPETEASEPPTTAPVEEAPKAES.

The GATA-type zinc-finger motif lies at 16 to 40 (CQNCATSTTPLWRRDEMGQVLCNAC). Disordered stretches follow at residues 70 to 143 (RPDL…NPHI) and 159 to 178 (PGFG…MNGE). Low complexity predominate over residues 104-113 (PNNPAAAARR). The segment covering 128-138 (SPVSRTGTPNV) has biased composition (polar residues). Positions 182–292 (QTHEQLLAAN…QDNGRHKKIR (111 aa)) form a coiled coil. Residues 306–318 (VEPQQPEQQQPAP) are compositionally biased toward low complexity. A disordered region spans residues 306-426 (VEPQQPEQQQ…PVEEAPKAES (121 aa)). Residues 335-353 (APAPAPEAAPEQAPAPAPE) show a composition bias toward pro residues. Positions 354 to 419 (PVQEQAQEPE…SEPPTTAPVE (66 aa)) are enriched in low complexity.

In terms of assembly, homotetramer.

The protein localises to the nucleus. Functionally, transcriptional regulator that functions in sexual development; disruption of asd-4 gene results in agenesis of ascus and ascospore with macroscopically normal fruiting body formation. The GATA-type zinc finger domain binds to DNA sequences from its own promoter region. The chain is GATA type zinc finger protein asd-4 (asd-4) from Neurospora crassa (strain ATCC 24698 / 74-OR23-1A / CBS 708.71 / DSM 1257 / FGSC 987).